Consider the following 364-residue polypeptide: Succinyl-diaminopimelate desuccinylase (364 aa).

H64 is a binding site for Zn(2+). Residue D66 is part of the active site. D95 lines the Zn(2+) pocket. The active-site Proton acceptor is E125. Residues E126, E154, and H339 each contribute to the Zn(2+) site.

It belongs to the peptidase M20A family. DapE subfamily. As to quaternary structure, homodimer. It depends on Zn(2+) as a cofactor. Co(2+) serves as cofactor.

It catalyses the reaction N-succinyl-(2S,6S)-2,6-diaminopimelate + H2O = (2S,6S)-2,6-diaminopimelate + succinate. Its pathway is amino-acid biosynthesis; L-lysine biosynthesis via DAP pathway; LL-2,6-diaminopimelate from (S)-tetrahydrodipicolinate (succinylase route): step 3/3. Functionally, catalyzes the hydrolysis of N-succinyl-L,L-diaminopimelic acid (SDAP), forming succinate and LL-2,6-diaminopimelate (DAP), an intermediate involved in the bacterial biosynthesis of lysine and meso-diaminopimelic acid, an essential component of bacterial cell walls. This Nitratiruptor sp. (strain SB155-2) protein is Succinyl-diaminopimelate desuccinylase.